Reading from the N-terminus, the 229-residue chain is Sperm flagellar protein 1 (229 aa).

The region spanning glutamate 7 to glutamine 115 is the Calponin-homology (CH) domain. Residues alanine 122 to glutamine 169 are disordered. The segment covering aspartate 123–threonine 136 has biased composition (polar residues). An essential for homodimerization and microtubule bundling activity region spans residues arginine 178–lysine 229.

Homodimer.

The protein localises to the cytoplasm. Its subcellular location is the cytoskeleton. It is found in the cilium axoneme. The protein resides in the apical cell membrane. Its function is as follows. Microtubule-associated protein involved in the stabilization of microtubules along the axis of migration during radial intercalation. Promotes the establishment and stabilization of an axis of microtubules required for the active migration of cells into the outer epithelium. Microtubule-associated protein that promotes microtubule bundling and stabilizes microtubules against depolymerization in response to cold shock. Essential for ciliary central apparatus formation which requires both its microtubule-binding and bundling activities. Regulates planar cell polarity signaling pathway and asymmetric microtubule accumulation in ciliated epithelia. This Xenopus laevis (African clawed frog) protein is Sperm flagellar protein 1.